The chain runs to 205 residues: Probable anaerobic dimethyl sulfoxide reductase chain YnfG (205 aa).

4Fe-4S ferredoxin-type domains are found at residues 5 to 33, 59 to 89, and 90 to 119; these read YGFF…LGPE, FAYY…KRED, and GFVV…YNAE. [4Fe-4S] cluster contacts are provided by Cys-14, Cys-17, Cys-20, Cys-24, Cys-67, Cys-70, Cys-75, Cys-79, Cys-99, Cys-102, Cys-105, Cys-109, Cys-126, Cys-129, Cys-141, and Cys-145. The interval 183–205 is disordered; that stretch reads IKPNANSRPTGDTTGYLANPEEV. Residues 186-195 are compositionally biased toward polar residues; that stretch reads NANSRPTGDT.

In terms of assembly, the complex consists of three subunits: YnfF, the reductase; YnfG, an electron transfer protein, and YnfH, a membrane anchor protein. [4Fe-4S] cluster serves as cofactor.

Electron transfer subunit of the terminal reductase during anaerobic growth on various sulfoxide and N-oxide compounds. The polypeptide is Probable anaerobic dimethyl sulfoxide reductase chain YnfG (ynfG) (Escherichia coli O6:H1 (strain CFT073 / ATCC 700928 / UPEC)).